Here is a 642-residue protein sequence, read N- to C-terminus: Cysteine-rich receptor-like protein kinase 27 (642 aa).

A signal peptide spans 1–24 (MASTSIMLSSFFSFFFLTFFVTYA). The Extracellular portion of the chain corresponds to 25–274 (QQNVTVHTIC…QGKSKDRSKT (250 aa)). N27, N40, N44, N70, N145, N173, and N258 each carry an N-linked (GlcNAc...) asparagine glycan. Gnk2-homologous domains are found at residues 29-130 (TVHT…SRII) and 136-240 (PVPF…VYPF). A helical transmembrane segment spans residues 275–295 (LIFAVVPIVAIILGLVFLFIY). The Cytoplasmic segment spans residues 296-642 (LKRRRKKKTL…DVSLTDLSAR (347 aa)). The Protein kinase domain maps to 333 to 620 (FSLTNKIGEG…QLPKPSQPGF (288 aa)). ATP is bound by residues 339-347 (IGEGGFGVV) and K361. Position 406 is a phosphotyrosine (Y406). D458 (proton acceptor) is an active-site residue. Position 462 is a phosphoserine (S462). T498 is modified (phosphothreonine). Y506 is subject to Phosphotyrosine.

This sequence belongs to the protein kinase superfamily. Ser/Thr protein kinase family. CRK subfamily.

Its subcellular location is the membrane. It carries out the reaction L-seryl-[protein] + ATP = O-phospho-L-seryl-[protein] + ADP + H(+). The catalysed reaction is L-threonyl-[protein] + ATP = O-phospho-L-threonyl-[protein] + ADP + H(+). The chain is Cysteine-rich receptor-like protein kinase 27 (CRK27) from Arabidopsis thaliana (Mouse-ear cress).